A 376-amino-acid chain; its full sequence is Neuropeptide receptor 3 (376 aa).

Topologically, residues 1–29 (MEGGRNCVMTVQQWQPEYNDMNQIRAIFS) are extracellular. A helical transmembrane segment spans residues 30 to 50 (LLYLLVWVGAIVGNTLVLYVL). Residues 51 to 66 (TFNQVSLSVRTVFVGC) are Cytoplasmic-facing. A helical transmembrane segment spans residues 67–87 (LAGSDLLMCLFSLPITAISIF). At 88–89 (SR) the chain is on the extracellular side. The helical transmembrane segment at 90–110 (VWVFPAIFCKLIGVFQGGTIF) threads the bilayer. Cys-98 and Cys-175 are joined by a disulfide. The Cytoplasmic portion of the chain corresponds to 111-139 (VSSFTLTVIALDRCVLILRPNQEIVNFPR). Residues 140–160 (AVFIVFCIWLLGYSLALPVGI) traverse the membrane as a helical segment. Residues 161 to 197 (YSDIAVYDEICGTFCEENWPDFNPDTGRSGIRRAYGL) are Extracellular-facing. The chain crosses the membrane as a helical span at residues 198–218 (SVLVLQFGIPALISSICYWMI). Residues 219–251 (SRVMSDQLARRRGHNIRPESETKLVNRKTRANR) lie on the Cytoplasmic side of the membrane. A helical membrane pass occupies residues 252-272 (MMIVMVVGFVLAWMPFNAVNL). At 273-284 (YRDLFGISKWYS) the chain is on the extracellular side. The helical transmembrane segment at 285-305 (TVFALCHVCAMCSAVLNPIIY) threads the bilayer. The Cytoplasmic segment spans residues 306–376 (SWFNPQFRQS…NDYRAGDQLL (71 aa)).

It belongs to the G-protein coupled receptor 1 family.

The protein localises to the cell membrane. Its function is as follows. G-protein coupled receptor for flp-15 neuropeptides. Receptor activation assays suggest binding to predicted flp-15 peptides, GGPQGPLRF-NH2 and RGPSGPLRF-NH2. Likely involved in Gi/Go-coupled signaling pathways. This is Neuropeptide receptor 3 from Caenorhabditis elegans.